Consider the following 124-residue polypeptide: Small ribosomal subunit protein uS12 (124 aa).

The residue at position 89 (Asp89) is a 3-methylthioaspartic acid.

Belongs to the universal ribosomal protein uS12 family. In terms of assembly, part of the 30S ribosomal subunit. Contacts proteins S8 and S17. May interact with IF1 in the 30S initiation complex.

In terms of biological role, with S4 and S5 plays an important role in translational accuracy. Its function is as follows. Interacts with and stabilizes bases of the 16S rRNA that are involved in tRNA selection in the A site and with the mRNA backbone. Located at the interface of the 30S and 50S subunits, it traverses the body of the 30S subunit contacting proteins on the other side and probably holding the rRNA structure together. The combined cluster of proteins S8, S12 and S17 appears to hold together the shoulder and platform of the 30S subunit. The polypeptide is Small ribosomal subunit protein uS12 (Vibrio vulnificus (strain CMCP6)).